The sequence spans 228 residues: MFNTLKILDLPENERPRERLIKYGSQALSNSELIAIILGTGGRNENVLSLSSRILKQCEGLNGLLTLTPEEIMTLKGIGSAKAAKIIAVGELAKRFKAYKSGDVYIIKSPGDVAGLVMEEMKYFKEEHLRVIMLNTKNIVISCKDVSIGSLNSAIVHPREVFCEALKKNSASIVICHNHPSGDPTPSSEDINVTKRLKQCGIILGINLLDHLIIGHSNYISLKEKNIL.

Residues 106 to 228 (IIKSPGDVAG…YISLKEKNIL (123 aa)) enclose the MPN domain. Residues His177, His179, and Asp190 each coordinate Zn(2+). The JAMM motif signature appears at 177–190 (HNHPSGDPTPSSED).

This sequence belongs to the UPF0758 family.

The chain is UPF0758 protein NT01CX_1687 from Clostridium novyi (strain NT).